Consider the following 101-residue polypeptide: Small ribosomal subunit protein uS14 (101 aa).

The protein belongs to the universal ribosomal protein uS14 family. In terms of assembly, part of the 30S ribosomal subunit. Contacts proteins S3 and S10.

Its function is as follows. Binds 16S rRNA, required for the assembly of 30S particles and may also be responsible for determining the conformation of the 16S rRNA at the A site. In Paramagnetospirillum magneticum (strain ATCC 700264 / AMB-1) (Magnetospirillum magneticum), this protein is Small ribosomal subunit protein uS14.